A 194-amino-acid chain; its full sequence is MTRDEVLAEFRAAGALLEGHFILSSGLRSGVFLQKARVFSEPERTERLCKALAAKVRAELGDAPTVIVSPATGGIVPGYEMARQMGLKGLYVERENGEFTLRRGFELTKDDKVLVVEDIVSTGLSSRECIEAINKTGATVIAEACLVDRSGGEADVGVPLIALTEYKVPAYPADQLPPELEAIPAIKPGSRGLA.

117–125 is a 5-phospho-alpha-D-ribose 1-diphosphate binding site; it reads EDIVSTGLS. Orotate is bound by residues S121 and R149.

This sequence belongs to the purine/pyrimidine phosphoribosyltransferase family. PyrE subfamily. In terms of assembly, homodimer. Mg(2+) is required as a cofactor.

It catalyses the reaction orotidine 5'-phosphate + diphosphate = orotate + 5-phospho-alpha-D-ribose 1-diphosphate. It functions in the pathway pyrimidine metabolism; UMP biosynthesis via de novo pathway; UMP from orotate: step 1/2. Its function is as follows. Catalyzes the transfer of a ribosyl phosphate group from 5-phosphoribose 1-diphosphate to orotate, leading to the formation of orotidine monophosphate (OMP). This Maricaulis maris (strain MCS10) (Caulobacter maris) protein is Orotate phosphoribosyltransferase.